The following is a 159-amino-acid chain: Protein US8.5 (159 aa).

The segment at 27 to 107 (SSQPLDPEGP…APSPHPRPPG (81 aa)) is disordered. The segment covering 80–91 (SDERGPPRHDRP) has biased composition (basic and acidic residues).

This sequence belongs to the HHV-1 US8.5 protein family. In terms of processing, phosphorylated.

The protein resides in the host nucleus. Its subcellular location is the host nucleolus. This chain is Protein US8.5, found in Human herpesvirus 1 (strain 17) (HHV-1).